Reading from the N-terminus, the 382-residue chain is Small ribosomal subunit protein bS1 homolog (382 aa).

S1 motif domains lie at 16-84 (GDVV…LSKR), 102-167 (KEVF…LSHR), 188-256 (GSVL…LSIK), and 273-342 (GDVL…LSMR). Position 243 is a phosphoserine (S243).

It belongs to the bacterial ribosomal protein bS1 family.

Its function is as follows. Plays a role in sporulation. Cannot be expressed in wild-type E.coli, does not complement an E.coli rpsA deletion. The protein is Small ribosomal subunit protein bS1 homolog of Bacillus subtilis (strain 168).